Here is a 452-residue protein sequence, read N- to C-terminus: Elongation factor Tu, mitochondrial (452 aa).

The transit peptide at 1-43 directs the protein to the mitochondrion; it reads MAAATLLRATPRFSGLCASPTPFLQGRLRPLKAPASPFLCRGL. In terms of domain architecture, tr-type G spans 55 to 251; it reads KPHVNVGTIG…AVDTYIPVPT (197 aa). Residues 64–71 are G1; it reads GHVDHGKT. Residues Asp-67, Gly-69, Lys-70, Thr-71, and Thr-72 each contribute to the GTP site. Residue Thr-71 coordinates Mg(2+). The residue at position 79 (Lys-79) is an N6-acetyllysine. N6-acetyllysine; alternate is present on Lys-88. Lys-88 bears the N6-succinyllysine; alternate mark. Positions 105 to 109 are G2; sequence GITIN. The tract at residues 126 to 129 is G3; it reads DCPG. GTP is bound by residues Asn-181, Asp-184, Ser-219, Ala-220, and Leu-221. Residues 181–184 are G4; it reads NKAD. The tract at residues 219–221 is G5; the sequence is SAL. Lys-234 carries the N6-succinyllysine modification. Lys-256 is subject to N6-acetyllysine. At Thr-278 the chain carries Phosphothreonine. The residue at position 286 (Lys-286) is an N6-succinyllysine. Ser-312 bears the Phosphoserine mark. N6-acetyllysine is present on residues Lys-361 and Lys-418.

Belongs to the TRAFAC class translation factor GTPase superfamily. Classic translation factor GTPase family. EF-Tu/EF-1A subfamily. Interacts with NLRX1. Interacts with ATG16L1.

The protein resides in the mitochondrion. It carries out the reaction GTP + H2O = GDP + phosphate + H(+). Its function is as follows. GTP hydrolase that promotes the GTP-dependent binding of aminoacyl-tRNA to the A-site of ribosomes during protein biosynthesis. Also plays a role in the regulation of autophagy and innate immunity. Recruits ATG5-ATG12 and NLRX1 at mitochondria and serves as a checkpoint of the RIGI-MAVS pathway. In turn, inhibits RLR-mediated type I interferon while promoting autophagy. This is Elongation factor Tu, mitochondrial (Tufm) from Mus musculus (Mouse).